Here is a 380-residue protein sequence, read N- to C-terminus: Erythronate-4-phosphate dehydrogenase (380 aa).

Substrate contacts are provided by serine 45 and threonine 66. Residues aspartate 146, threonine 174, 205 to 207 (ASR), and aspartate 231 each bind NAD(+). Residue arginine 207 is part of the active site. Glutamate 236 is an active-site residue. Histidine 253 (proton donor) is an active-site residue. Glycine 256 provides a ligand contact to NAD(+). Position 257 (tyrosine 257) interacts with substrate.

Belongs to the D-isomer specific 2-hydroxyacid dehydrogenase family. PdxB subfamily. Homodimer.

It is found in the cytoplasm. It carries out the reaction 4-phospho-D-erythronate + NAD(+) = (R)-3-hydroxy-2-oxo-4-phosphooxybutanoate + NADH + H(+). Its pathway is cofactor biosynthesis; pyridoxine 5'-phosphate biosynthesis; pyridoxine 5'-phosphate from D-erythrose 4-phosphate: step 2/5. Its function is as follows. Catalyzes the oxidation of erythronate-4-phosphate to 3-hydroxy-2-oxo-4-phosphonooxybutanoate. In Pseudomonas putida (strain GB-1), this protein is Erythronate-4-phosphate dehydrogenase.